We begin with the raw amino-acid sequence, 233 residues long: 2-C-methyl-D-erythritol 4-phosphate cytidylyltransferase (233 aa).

The protein belongs to the IspD/TarI cytidylyltransferase family. IspD subfamily.

The catalysed reaction is 2-C-methyl-D-erythritol 4-phosphate + CTP + H(+) = 4-CDP-2-C-methyl-D-erythritol + diphosphate. It functions in the pathway isoprenoid biosynthesis; isopentenyl diphosphate biosynthesis via DXP pathway; isopentenyl diphosphate from 1-deoxy-D-xylulose 5-phosphate: step 2/6. Functionally, catalyzes the formation of 4-diphosphocytidyl-2-C-methyl-D-erythritol from CTP and 2-C-methyl-D-erythritol 4-phosphate (MEP). In Carboxydothermus hydrogenoformans (strain ATCC BAA-161 / DSM 6008 / Z-2901), this protein is 2-C-methyl-D-erythritol 4-phosphate cytidylyltransferase.